The following is a 346-amino-acid chain: Holliday junction branch migration complex subunit RuvB (346 aa).

A large ATPase domain (RuvB-L) region spans residues 1–181 (MSDRNPLIDA…FGIPTRLNFY (181 aa)). ATP is bound by residues Leu-20, Arg-21, Gly-62, Lys-65, Thr-66, Thr-67, 128–130 (EDF), Arg-171, Tyr-181, and Arg-218. Thr-66 serves as a coordination point for Mg(2+). Residues 182 to 252 (TVEELEYIVR…IADEALSRLE (71 aa)) are small ATPAse domain (RuvB-S). The segment at 255-346 (NRGLDQLDRR…SQYGLFMEDE (92 aa)) is head domain (RuvB-H). Positions 291, 310, and 315 each coordinate DNA.

Belongs to the RuvB family. Homohexamer. Forms an RuvA(8)-RuvB(12)-Holliday junction (HJ) complex. HJ DNA is sandwiched between 2 RuvA tetramers; dsDNA enters through RuvA and exits via RuvB. An RuvB hexamer assembles on each DNA strand where it exits the tetramer. Each RuvB hexamer is contacted by two RuvA subunits (via domain III) on 2 adjacent RuvB subunits; this complex drives branch migration. In the full resolvosome a probable DNA-RuvA(4)-RuvB(12)-RuvC(2) complex forms which resolves the HJ.

It is found in the cytoplasm. It catalyses the reaction ATP + H2O = ADP + phosphate + H(+). The RuvA-RuvB-RuvC complex processes Holliday junction (HJ) DNA during genetic recombination and DNA repair, while the RuvA-RuvB complex plays an important role in the rescue of blocked DNA replication forks via replication fork reversal (RFR). RuvA specifically binds to HJ cruciform DNA, conferring on it an open structure. The RuvB hexamer acts as an ATP-dependent pump, pulling dsDNA into and through the RuvAB complex. RuvB forms 2 homohexamers on either side of HJ DNA bound by 1 or 2 RuvA tetramers; 4 subunits per hexamer contact DNA at a time. Coordinated motions by a converter formed by DNA-disengaged RuvB subunits stimulates ATP hydrolysis and nucleotide exchange. Immobilization of the converter enables RuvB to convert the ATP-contained energy into a lever motion, pulling 2 nucleotides of DNA out of the RuvA tetramer per ATP hydrolyzed, thus driving DNA branch migration. The RuvB motors rotate together with the DNA substrate, which together with the progressing nucleotide cycle form the mechanistic basis for DNA recombination by continuous HJ branch migration. Branch migration allows RuvC to scan DNA until it finds its consensus sequence, where it cleaves and resolves cruciform DNA. This chain is Holliday junction branch migration complex subunit RuvB, found in Brucella anthropi (strain ATCC 49188 / DSM 6882 / CCUG 24695 / JCM 21032 / LMG 3331 / NBRC 15819 / NCTC 12168 / Alc 37) (Ochrobactrum anthropi).